A 172-amino-acid chain; its full sequence is Adenine phosphoribosyltransferase (172 aa).

This sequence belongs to the purine/pyrimidine phosphoribosyltransferase family. As to quaternary structure, homodimer.

Its subcellular location is the cytoplasm. It carries out the reaction AMP + diphosphate = 5-phospho-alpha-D-ribose 1-diphosphate + adenine. The protein operates within purine metabolism; AMP biosynthesis via salvage pathway; AMP from adenine: step 1/1. Catalyzes a salvage reaction resulting in the formation of AMP, that is energically less costly than de novo synthesis. This Trichormus variabilis (strain ATCC 29413 / PCC 7937) (Anabaena variabilis) protein is Adenine phosphoribosyltransferase.